The sequence spans 124 residues: Autophagy-related protein 8 (124 aa).

G116 carries Phosphatidylethanolamine amidated glycine lipidation. Residues 117–124 (GAGPLLEK) constitute a propeptide, removed in mature form.

Belongs to the ATG8 family. Conjugation to phosphatidylethanolamine (PE) leads to homodimerization. Interacts with ATG1, ATG3, ATG4, ATG7 and ATG12. The C-terminal 8 residues of ATG8 are removed by ATG4 to expose Gly-116 at the C-terminus. This Gly-116 forms then a thioester bond with the 'Cys-550' of ATG7 (E1-like activating enzyme) before being transferred to the 'Cys-244' of ATG3 (the specific E2 conjugating enzyme), in order to be finally amidated with phosphatidylethanolamine. This lipid modification anchors ATG8 to membranes and can be reversed by ATG4, releasing soluble ATG8.

The protein resides in the cytoplasmic vesicle. It is found in the cvt vesicle membrane. It localises to the autophagosome membrane. The protein localises to the vacuole membrane. In terms of biological role, ubiquitin-like modifier involved in cytoplasm to vacuole transport (Cvt) vesicles and autophagosome formation. With ATG4, mediates the delivery of the vesicles and autophagosomes to the vacuole via the microtubule cytoskeleton. Required for selective autophagic degradation of the nucleus (nucleophagy) as well as for mitophagy which contributes to regulate mitochondrial quantity and quality by eliminating the mitochondria to a basal level to fulfill cellular energy requirements and preventing excess ROS production. Also participates in membrane fusion events that take place in the early secretory pathway. Also involved in endoplasmic reticulum-specific autophagic process and is essential for the survival of cells subjected to severe ER stress. The ATG8-PE conjugate mediates tethering between adjacent membranes and stimulates membrane hemifusion, leading to expansion of the autophagosomal membrane during autophagy. Moreover not only conjugation, but also subsequent ATG8-PE deconjugation is an important step required to facilitate multiple events during macroautophagy, and especially for efficient autophagosome biogenesis, the assembly of ATG9-containing tubulovesicular clusters into phagophores/autophagosomes, and for the disassembly of PAS-associated ATG components. This Kluyveromyces marxianus (strain DMKU3-1042 / BCC 29191 / NBRC 104275) (Yeast) protein is Autophagy-related protein 8.